Reading from the N-terminus, the 249-residue chain is 5'-nucleotidase SurE (249 aa).

Residues Asp9, Asp10, Ser40, and Asn92 each contribute to the a divalent metal cation site.

Belongs to the SurE nucleotidase family. Requires a divalent metal cation as cofactor.

The protein localises to the cytoplasm. It carries out the reaction a ribonucleoside 5'-phosphate + H2O = a ribonucleoside + phosphate. Its function is as follows. Nucleotidase that shows phosphatase activity on nucleoside 5'-monophosphates. This Shewanella baltica (strain OS195) protein is 5'-nucleotidase SurE.